The primary structure comprises 865 residues: Bifunctional uridylyltransferase/uridylyl-removing enzyme (865 aa).

Positions 1–318 are uridylyltransferase; it reads MPHVDLNPLK…FPRPDSDARL (318 aa). A uridylyl-removing region spans residues 319 to 675; that stretch reads IDDDFRNLRE…VRPTEHGEGL (357 aa). Residues 437 to 559 enclose the HD domain; sequence VDQHTLAVVR…VGDERRLAAL (123 aa). ACT domains follow at residues 676–762 and 789–865; these read QVMV…RLPH and RLSV…QQAA. Residues 747 to 767 are disordered; sequence DPHAARHAHAPRRLPHSHARR. Basic residues predominate over residues 751-767; that stretch reads ARHAHAPRRLPHSHARR.

Belongs to the GlnD family. The cofactor is Mg(2+).

It carries out the reaction [protein-PII]-L-tyrosine + UTP = [protein-PII]-uridylyl-L-tyrosine + diphosphate. The catalysed reaction is [protein-PII]-uridylyl-L-tyrosine + H2O = [protein-PII]-L-tyrosine + UMP + H(+). Its activity is regulated as follows. Uridylyltransferase (UTase) activity is inhibited by glutamine, while glutamine activates uridylyl-removing (UR) activity. Its function is as follows. Modifies, by uridylylation and deuridylylation, the PII regulatory proteins (GlnB and homologs), in response to the nitrogen status of the cell that GlnD senses through the glutamine level. Under low glutamine levels, catalyzes the conversion of the PII proteins and UTP to PII-UMP and PPi, while under higher glutamine levels, GlnD hydrolyzes PII-UMP to PII and UMP (deuridylylation). Thus, controls uridylylation state and activity of the PII proteins, and plays an important role in the regulation of nitrogen assimilation and metabolism. This Bordetella parapertussis (strain 12822 / ATCC BAA-587 / NCTC 13253) protein is Bifunctional uridylyltransferase/uridylyl-removing enzyme.